A 388-amino-acid polypeptide reads, in one-letter code: Flap endonuclease 1 (388 aa).

The tract at residues 1–104 is N-domain; sequence MGILGLSKLI…GELAKRAERR (104 aa). Residue Asp-34 participates in Mg(2+) binding. Residues Arg-47 and Arg-70 each coordinate DNA. Mg(2+) contacts are provided by Asp-86, Glu-158, Glu-160, Asp-179, and Asp-181. The tract at residues 122–253 is I-domain; the sequence is EIEKFNRRLV…KRAIELIKTY (132 aa). Glu-158 serves as a coordination point for DNA. 2 residues coordinate DNA: Gly-231 and Asp-233. Asp-233 is a binding site for Mg(2+). The segment at 336–344 is interaction with PCNA; it reads TQVRLDSFF. The disordered stretch occupies residues 351-388; that stretch reads PNATAAAKRKAEEIKKSANNKKAKTSGGSGAARGRRPK.

It belongs to the XPG/RAD2 endonuclease family. FEN1 subfamily. Interacts with PCNA. Three molecules of FEN1 bind to one PCNA trimer with each molecule binding to one PCNA monomer. PCNA stimulates the nuclease activity without altering cleavage specificity. Requires Mg(2+) as cofactor. Phosphorylated. Phosphorylation upon DNA damage induces relocalization to the nuclear plasma.

The protein resides in the nucleus. The protein localises to the nucleolus. It localises to the nucleoplasm. Its subcellular location is the mitochondrion. Its function is as follows. Structure-specific nuclease with 5'-flap endonuclease and 5'-3' exonuclease activities involved in DNA replication and repair. During DNA replication, cleaves the 5'-overhanging flap structure that is generated by displacement synthesis when DNA polymerase encounters the 5'-end of a downstream Okazaki fragment. It enters the flap from the 5'-end and then tracks to cleave the flap base, leaving a nick for ligation. Also involved in the long patch base excision repair (LP-BER) pathway, by cleaving within the apurinic/apyrimidinic (AP) site-terminated flap. Acts as a genome stabilization factor that prevents flaps from equilibrating into structures that lead to duplications and deletions. Also possesses 5'-3' exonuclease activity on nicked or gapped double-stranded DNA, and exhibits RNase H activity. Also involved in replication and repair of rDNA and in repairing mitochondrial DNA. This chain is Flap endonuclease 1, found in Drosophila mojavensis (Fruit fly).